Reading from the N-terminus, the 279-residue chain is Sperm acrosome membrane-associated protein 1 (279 aa).

The N-terminal stretch at 1–29 (MKSRGAGCSARLLLTVGWLLLAGLQSTCG) is a signal peptide. At 30 to 221 (INVTAIQDPS…VIICIFVIFV (192 aa)) the chain is on the extracellular side. An N-linked (GlcNAc...) asparagine glycan is attached at Asn-31. The interval 39-74 (SLAREGEGEPEGDEEPENDSETEKEPQAEAEDDSEG) is disordered. Over residues 46 to 58 (GEPEGDEEPENDS) the composition is skewed to acidic residues. A helical transmembrane segment spans residues 222–242 (LIFIIINWTAVKDFWAKASTT). Over 243–279 (EIQSELSSMRYKDSTSLDQSPTDIPGHEDDALSEWNE) the chain is Cytoplasmic. At Tyr-253 the chain carries Phosphotyrosine. The tract at residues 253-279 (YKDSTSLDQSPTDIPGHEDDALSEWNE) is disordered. Ser-262 and Ser-275 each carry phosphoserine.

In terms of assembly, interacts with CYLC1; the interaction may be relevant for proper acrosome attachment to the nuclear envelope. N-glycosylated.

The protein localises to the cytoplasmic vesicle. The protein resides in the secretory vesicle. It is found in the acrosome inner membrane. Its function is as follows. Plays a role in acrosome expansion and establishment of normal sperm morphology during spermatogenesis. Important for male fertility. The chain is Sperm acrosome membrane-associated protein 1 (SPACA1) from Bos taurus (Bovine).